A 305-amino-acid chain; its full sequence is Ribonuclease HIII (305 aa).

Residues 91–305 enclose the RNase H type-2 domain; sequence WSVIGSDEVG…ANTQKAQKLL (215 aa). Positions 97, 98, and 201 each coordinate a divalent metal cation.

The protein belongs to the RNase HII family. RnhC subfamily. Mn(2+) is required as a cofactor. Requires Mg(2+) as cofactor.

It localises to the cytoplasm. The catalysed reaction is Endonucleolytic cleavage to 5'-phosphomonoester.. Functionally, endonuclease that specifically degrades the RNA of RNA-DNA hybrids. The protein is Ribonuclease HIII of Enterococcus faecalis (strain ATCC 700802 / V583).